Reading from the N-terminus, the 743-residue chain is MKIDKRLMVIVAIATLFRMIPFRLKYLVGSDPYFHLAYIEEALKAGEWFNFFTYAGGPWGLQVRLFHPLGLWATPAYIYKLFSFLGISLYTAFRVTPVIFGVLTVVFFYLSLKKLYNRDVAFIVGLFLGVNYGHIFRSMANYYRGDNYMLFWYSVALLGIALGLKTRSKYRYLFYLLPGIATGFASAFWQAYYPIFVFVLAGGLLLGVYAYLKSPKLFLDSILIVLSTGLGVLIANILGDKVGYGMLGYTDWMGKKVAETFGLEFGFIKDAYLLIHVKYLLPLSLVFLGFLIITKKLNPKIKVGVLVGGSILAFIVMLVKFPALKDLSTGFGTFREVPISETLPPTLDDLWRAYNIAIFLAALYILRLRKIRSGDAILLGYVITSLWMLRYWTRFLFTAAPAVAFLSGIGVYELTRRIKENKIRITSLGVVILLSSAFSLGEVYSVKPFMNENWEKALIFIRENSNENDIVLTWWDWGHFVTYYARRSPVAQGSPNSGVAGYYLGLVDNGWAQSLGVDYVIVSLYDILKFEAIVDTAKLSRKWENISRADYGVDFLKLTESTGSILRFDSQYSTLIVKEGNIRVILSGKVVYPREAIIESNGRIKNLKYPARSGVYVYVNLDYGYAILANEKAWETNLLRLFTQRTGENYELVYSDGGFVKVFRFVHPNVVFRGNKFILTGNGTGLGLYGYLDNGTLVFKKWYSVKNMQEFELPNNLNGSVVVRYVYTQGKIVLDRGIVRVKN.

Residues 1–7 (MKIDKRL) are Cytoplasmic-facing. A helical membrane pass occupies residues 8 to 28 (MVIVAIATLFRMIPFRLKYLV). The DXD motif 1 motif lies at 29 to 31 (GSD). The Extracellular portion of the chain corresponds to 29 to 91 (GSDPYFHLAY…FSFLGISLYT (63 aa)). Residue aspartate 31 coordinates Mn(2+). A helical membrane pass occupies residues 92–112 (AFRVTPVIFGVLTVVFFYLSL). The Cytoplasmic segment spans residues 113–119 (KKLYNRD). Residues 120–140 (VAFIVGLFLGVNYGHIFRSMA) form a helical membrane-spanning segment. Over 141–144 (NYYR) the chain is Extracellular. 2 residues coordinate Mn(2+): arginine 144 and aspartate 146. The short motif at 144–146 (RGD) is the DXD motif 2 element. The helical transmembrane segment at 145-165 (GDNYMLFWYSVALLGIALGLK) threads the bilayer. The Cytoplasmic segment spans residues 166–170 (TRSKY). 2 helical membrane-spanning segments follow: residues 171–191 (RYLF…FWQA) and 192–212 (YYPI…YAYL). Residues 213–216 (KSPK) lie on the Cytoplasmic side of the membrane. Residues 217–237 (LFLDSILIVLSTGLGVLIANI) form a helical membrane-spanning segment. The Extracellular portion of the chain corresponds to 238–272 (LGDKVGYGMLGYTDWMGKKVAETFGLEFGFIKDAY). The chain crosses the membrane as a helical span at residues 273–293 (LLIHVKYLLPLSLVFLGFLII). Residues 294 to 302 (TKKLNPKIK) lie on the Cytoplasmic side of the membrane. The helical transmembrane segment at 303-323 (VGVLVGGSILAFIVMLVKFPA) threads the bilayer. Residues 324-345 (LKDLSTGFGTFREVPISETLPP) lie on the Extracellular side of the membrane. The TIXE motif motif lies at 333–336 (TFRE). A helical membrane pass occupies residues 346-366 (TLDDLWRAYNIAIFLAALYIL). At 367-373 (RLRKIRS) the chain is on the cytoplasmic side. The helical transmembrane segment at 374 to 391 (GDAILLGYVITSLWMLRY) threads the bilayer. The Extracellular portion of the chain corresponds to 392–394 (WTR). Arginine 394 serves as a coordination point for a glycophospholipid. The helical transmembrane segment at 395 to 415 (FLFTAAPAVAFLSGIGVYELT) threads the bilayer. The Cytoplasmic portion of the chain corresponds to 416 to 424 (RRIKENKIR). Residues 425–445 (ITSLGVVILLSSAFSLGEVYS) traverse the membrane as a helical segment. Topologically, residues 446–743 (VKPFMNENWE…LDRGIVRVKN (298 aa)) are extracellular. An interacts with target acceptor peptide in protein substrate region spans residues 474–476 (WWD). Positions 474–478 (WWDWG) match the WWDYG motif motif. Residues 526–533 (DILKFEAI) carry the DK motif motif.

This sequence belongs to the STT3 family. The cofactor is Mn(2+). Requires Mg(2+) as cofactor.

It is found in the cell membrane. It carries out the reaction an archaeal dolichyl phosphooligosaccharide + [protein]-L-asparagine = an archaeal dolichyl phosphate + a glycoprotein with the oligosaccharide chain attached by N-beta-D-glycosyl linkage to a protein L-asparagine.. Its pathway is protein modification; protein glycosylation. Functionally, oligosaccharyl transferase (OST) that catalyzes the initial transfer of a defined glycan (ManNAcXyl(2)GlcAMan(2)GalNAc in P.furiosus) from the lipid carrier dolichol-monophosphate to an asparagine residue within an Asn-X-Ser/Thr consensus motif in nascent polypeptide chains, the first step in protein N-glycosylation. The protein is Dolichyl-phosphooligosaccharide-protein glycotransferase 2 (aglB2) of Pyrococcus furiosus (strain ATCC 43587 / DSM 3638 / JCM 8422 / Vc1).